Consider the following 278-residue polypeptide: Digeranylgeranylglyceryl phosphate synthase (278 aa).

Helical transmembrane passes span 15–35 (VIGS…WKIV), 36–56 (PIKL…GYII), 89–109 (IVLF…AFII), 133–153 (LIVA…FFEG), 159–179 (TLIP…VKGI), 203–223 (WFIS…PYFF), 225–245 (FNII…LVVL), and 258–278 (AYMK…TLPI).

It belongs to the UbiA prenyltransferase family. DGGGP synthase subfamily. It depends on Mg(2+) as a cofactor.

The protein resides in the cell membrane. The enzyme catalyses sn-3-O-(geranylgeranyl)glycerol 1-phosphate + (2E,6E,10E)-geranylgeranyl diphosphate = 2,3-bis-O-(geranylgeranyl)-sn-glycerol 1-phosphate + diphosphate. It participates in membrane lipid metabolism; glycerophospholipid metabolism. Functionally, prenyltransferase that catalyzes the transfer of the geranylgeranyl moiety of geranylgeranyl diphosphate (GGPP) to the C2 hydroxyl of (S)-3-O-geranylgeranylglyceryl phosphate (GGGP). This reaction is the second ether-bond-formation step in the biosynthesis of archaeal membrane lipids. This is Digeranylgeranylglyceryl phosphate synthase from Sulfurisphaera tokodaii (strain DSM 16993 / JCM 10545 / NBRC 100140 / 7) (Sulfolobus tokodaii).